The sequence spans 367 residues: UDP-N-acetylglucosamine--N-acetylmuramyl-(pentapeptide) pyrophosphoryl-undecaprenol N-acetylglucosamine transferase (367 aa).

UDP-N-acetyl-alpha-D-glucosamine-binding positions include Thr-15–Gly-17, Asn-127, Arg-163, Ser-191, Ile-249, and Gln-294.

The protein belongs to the glycosyltransferase 28 family. MurG subfamily.

It is found in the cell inner membrane. It carries out the reaction di-trans,octa-cis-undecaprenyl diphospho-N-acetyl-alpha-D-muramoyl-L-alanyl-D-glutamyl-meso-2,6-diaminopimeloyl-D-alanyl-D-alanine + UDP-N-acetyl-alpha-D-glucosamine = di-trans,octa-cis-undecaprenyl diphospho-[N-acetyl-alpha-D-glucosaminyl-(1-&gt;4)]-N-acetyl-alpha-D-muramoyl-L-alanyl-D-glutamyl-meso-2,6-diaminopimeloyl-D-alanyl-D-alanine + UDP + H(+). It participates in cell wall biogenesis; peptidoglycan biosynthesis. Cell wall formation. Catalyzes the transfer of a GlcNAc subunit on undecaprenyl-pyrophosphoryl-MurNAc-pentapeptide (lipid intermediate I) to form undecaprenyl-pyrophosphoryl-MurNAc-(pentapeptide)GlcNAc (lipid intermediate II). The chain is UDP-N-acetylglucosamine--N-acetylmuramyl-(pentapeptide) pyrophosphoryl-undecaprenol N-acetylglucosamine transferase from Burkholderia cenocepacia (strain HI2424).